Here is a 36-residue protein sequence, read N- to C-terminus: Photosystem I reaction center subunit VIII (36 aa).

Residues 4–24 traverse the membrane as a helical segment; it reads FSLPSILVPLVGLVLPAIAMA.

This sequence belongs to the PsaI family.

The protein resides in the plastid. It localises to the chloroplast thylakoid membrane. In terms of biological role, may help in the organization of the PsaL subunit. This is Photosystem I reaction center subunit VIII from Piper cenocladum (Ant piper).